A 144-amino-acid polypeptide reads, in one-letter code: UPF0547 protein C16orf87 homolog (144 aa).

A disordered region spans residues 33-112; that stretch reads HAKQSQRLPP…EEKEKQEKEV (80 aa). Polar residues predominate over residues 35–45; the sequence is KQSQRLPPTSE. A compositionally biased stretch (basic residues) spans 50-62; sequence PKRRRTERIKRER. Composition is skewed to basic and acidic residues over residues 63-74 and 99-112; these read IHTAVNRDLENR and KKHEEEKEKQEKEV. Positions 94-122 form a coiled coil; it reads KTATTKKHEEEKEKQEKEVDMYANLSDEK.

Belongs to the UPF0547 family.

In Xenopus laevis (African clawed frog), this protein is UPF0547 protein C16orf87 homolog.